Here is a 218-residue protein sequence, read N- to C-terminus: Large ribosomal subunit protein eL14 (218 aa).

Lysine 79 bears the N6-acetyllysine mark. N6-acetyllysine; alternate is present on lysine 85. Lysine 85 is subject to N6-succinyllysine; alternate. Lysine 124 participates in a covalent cross-link: Glycyl lysine isopeptide (Lys-Gly) (interchain with G-Cter in SUMO2). Residue serine 139 is modified to Phosphoserine. Residues 159-218 (VPAKKATAAGKKAAAQKAPAQKAPAQKAAGQKAAQPPKAQKGQKPPAQKAPAPKASGKKA) form a disordered region. Repeat copies occupy residues 174 to 178 (QKAPA), 179 to 183 (QKAPA), 184 to 188 (QKAAG), 189 to 193 (QKAAQ), 196 to 198 (KAQ), and 199 to 201 (KGQ). Positions 174 to 193 (QKAPAQKAPAQKAAGQKAAQ) are 4 X 5 AA tandem repeats of Q-K-A-[PAS]-X. The interval 196–201 (KAQKGQ) is 2 X 3 AA tandem repeats of K-[GA]-Q. Position 207 is an N6-succinyllysine (lysine 207).

The protein belongs to the eukaryotic ribosomal protein eL14 family. In terms of assembly, component of the large ribosomal subunit.

It is found in the cytoplasm. Functionally, component of the large ribosomal subunit. The ribosome is a large ribonucleoprotein complex responsible for the synthesis of proteins in the cell. The chain is Large ribosomal subunit protein eL14 (RPL14) from Oryctolagus cuniculus (Rabbit).